The sequence spans 130 residues: Small ribosomal subunit protein uS11 (130 aa).

The protein belongs to the universal ribosomal protein uS11 family. In terms of assembly, part of the 30S ribosomal subunit. Interacts with proteins S7 and S18. Binds to IF-3.

Functionally, located on the platform of the 30S subunit, it bridges several disparate RNA helices of the 16S rRNA. Forms part of the Shine-Dalgarno cleft in the 70S ribosome. The polypeptide is Small ribosomal subunit protein uS11 (Shewanella baltica (strain OS223)).